The sequence spans 191 residues: MNREEIIDIFTKTGAMLSGHFRLTSGKHSNRYFQCAQVLQHPQYTQKLCQELANRFENQGVQTVIGPAMGGILVSYEVARSLGVRSLFTERENGKMSLRRSFSLQPGEKVLVVEDVITTGGSVAEVIEVVKSLGGEVVGVGVLVDRSNGKANLGVRTEALLTVSVETYDPDNCPLCDQGLPAVKPGSRQIT.

Glu114 to Ser122 lines the 5-phospho-alpha-D-ribose 1-diphosphate pocket. Orotate contacts are provided by Thr118 and Arg146.

The protein belongs to the purine/pyrimidine phosphoribosyltransferase family. PyrE subfamily. As to quaternary structure, homodimer. The cofactor is Mg(2+).

The catalysed reaction is orotidine 5'-phosphate + diphosphate = orotate + 5-phospho-alpha-D-ribose 1-diphosphate. Its pathway is pyrimidine metabolism; UMP biosynthesis via de novo pathway; UMP from orotate: step 1/2. Its function is as follows. Catalyzes the transfer of a ribosyl phosphate group from 5-phosphoribose 1-diphosphate to orotate, leading to the formation of orotidine monophosphate (OMP). The sequence is that of Orotate phosphoribosyltransferase from Desulforamulus reducens (strain ATCC BAA-1160 / DSM 100696 / MI-1) (Desulfotomaculum reducens).